Reading from the N-terminus, the 175-residue chain is Protein LpfE (175 aa).

Residues 1 to 20 (MKNLHALMPACLLLTASAMA) form the signal peptide.

It belongs to the fimbrial protein family.

The protein localises to the fimbrium. This Salmonella typhimurium (strain LT2 / SGSC1412 / ATCC 700720) protein is Protein LpfE (lpfE).